Reading from the N-terminus, the 727-residue chain is Glucans biosynthesis glucosyltransferase H (727 aa).

Positions 18-45 (SAMPNERPGAMEPQSLTEMPEGFPRRST) are disordered. The next 7 helical transmembrane spans lie at 58 to 78 (FFVVGGALLLSSFAIYEMGAV), 90 to 110 (LVLLLFAINFCWIALAFCSGI), 278 to 298 (LQQFAARIYGPVIGTGLGWWV), 408 to 428 (IMAYLSSPFWLLLILTGLMLA), 460 to 480 (LFYITMGVLFGPKIFGVLLLL), 496 to 516 (IFSVLFEVVLSALIAPIMMFI), and 572 to 592 (LLAWMSPALIGLWFAVPISAW).

Belongs to the glycosyltransferase 2 family. OpgH subfamily.

Its subcellular location is the cell inner membrane. It functions in the pathway glycan metabolism; osmoregulated periplasmic glucan (OPG) biosynthesis. Functionally, involved in the biosynthesis of osmoregulated periplasmic glucans (OPGs). The polypeptide is Glucans biosynthesis glucosyltransferase H (Shewanella putrefaciens (strain CN-32 / ATCC BAA-453)).